The chain runs to 266 residues: MIAMNTPDFQRMKKDNKKISMVTCYDYWSACIISQSNVDCILVGDSLAMVMYGHSTTLPATVEIMAQHIQAVSRGAPNKFIIGDMPFCSYRKDLTTSMNAVERLMQAGAQAIKLEGADAHNLKFIHHVVKSGIPVIGHLGLTPQSIYTLGGFKVQGKEPSAAKKLMADAKALAETGCFAVVLECVPSELAELITNSISIPTIGIGAGPATSGQVLVLQDLLGTNNQFQPKYLKKFLNGFELIKKALDDFDQEVKTSTYPHLETHCY.

Positions 45 and 84 each coordinate Mg(2+). 3-methyl-2-oxobutanoate-binding positions include 45-46 (DS), Asp84, and Lys113. Residue Glu115 participates in Mg(2+) binding. The Proton acceptor role is filled by Glu183.

Belongs to the PanB family. In terms of assembly, homodecamer; pentamer of dimers. Mg(2+) is required as a cofactor.

The protein localises to the cytoplasm. It catalyses the reaction 3-methyl-2-oxobutanoate + (6R)-5,10-methylene-5,6,7,8-tetrahydrofolate + H2O = 2-dehydropantoate + (6S)-5,6,7,8-tetrahydrofolate. The protein operates within cofactor biosynthesis; (R)-pantothenate biosynthesis; (R)-pantoate from 3-methyl-2-oxobutanoate: step 1/2. Catalyzes the reversible reaction in which hydroxymethyl group from 5,10-methylenetetrahydrofolate is transferred onto alpha-ketoisovalerate to form ketopantoate. This chain is 3-methyl-2-oxobutanoate hydroxymethyltransferase, found in Coxiella burnetii (strain CbuK_Q154) (Coxiella burnetii (strain Q154)).